Consider the following 174-residue polypeptide: Peptide deformylase (174 aa).

Residues Cys-96 and His-138 each contribute to the Fe cation site. Residue Glu-139 is part of the active site. His-142 lines the Fe cation pocket.

The protein belongs to the polypeptide deformylase family. The cofactor is Fe(2+).

The catalysed reaction is N-terminal N-formyl-L-methionyl-[peptide] + H2O = N-terminal L-methionyl-[peptide] + formate. Removes the formyl group from the N-terminal Met of newly synthesized proteins. Requires at least a dipeptide for an efficient rate of reaction. N-terminal L-methionine is a prerequisite for activity but the enzyme has broad specificity at other positions. In Helicobacter pylori (strain G27), this protein is Peptide deformylase.